Here is a 556-residue protein sequence, read N- to C-terminus: 2-succinyl-5-enolpyruvyl-6-hydroxy-3-cyclohexene-1-carboxylate synthase (556 aa).

Belongs to the TPP enzyme family. MenD subfamily. As to quaternary structure, homodimer. It depends on Mg(2+) as a cofactor. Requires Mn(2+) as cofactor. The cofactor is thiamine diphosphate.

It catalyses the reaction isochorismate + 2-oxoglutarate + H(+) = 5-enolpyruvoyl-6-hydroxy-2-succinyl-cyclohex-3-ene-1-carboxylate + CO2. It functions in the pathway quinol/quinone metabolism; 1,4-dihydroxy-2-naphthoate biosynthesis; 1,4-dihydroxy-2-naphthoate from chorismate: step 2/7. Its pathway is quinol/quinone metabolism; menaquinone biosynthesis. Functionally, catalyzes the thiamine diphosphate-dependent decarboxylation of 2-oxoglutarate and the subsequent addition of the resulting succinic semialdehyde-thiamine pyrophosphate anion to isochorismate to yield 2-succinyl-5-enolpyruvyl-6-hydroxy-3-cyclohexene-1-carboxylate (SEPHCHC). The sequence is that of 2-succinyl-5-enolpyruvyl-6-hydroxy-3-cyclohexene-1-carboxylate synthase from Klebsiella pneumoniae subsp. pneumoniae (strain ATCC 700721 / MGH 78578).